Reading from the N-terminus, the 607-residue chain is UvrABC system protein C (607 aa).

In terms of domain architecture, GIY-YIG spans 11–89 (CKPGVYRFED…IKEFAPPCNV (79 aa)). The UVR domain occupies 201–236 (SSLLESLKKKMLKASKNKEYEEAAILRDKIQAAQTV).

This sequence belongs to the UvrC family. Interacts with UvrB in an incision complex.

Its subcellular location is the cytoplasm. In terms of biological role, the UvrABC repair system catalyzes the recognition and processing of DNA lesions. UvrC both incises the 5' and 3' sides of the lesion. The N-terminal half is responsible for the 3' incision and the C-terminal half is responsible for the 5' incision. This is UvrABC system protein C from Tropheryma whipplei (strain TW08/27) (Whipple's bacillus).